An 874-amino-acid polypeptide reads, in one-letter code: Alanine--tRNA ligase (874 aa).

Residues His-562, His-566, Cys-664, and His-668 each contribute to the Zn(2+) site.

This sequence belongs to the class-II aminoacyl-tRNA synthetase family. It depends on Zn(2+) as a cofactor.

It is found in the cytoplasm. It catalyses the reaction tRNA(Ala) + L-alanine + ATP = L-alanyl-tRNA(Ala) + AMP + diphosphate. Its function is as follows. Catalyzes the attachment of alanine to tRNA(Ala) in a two-step reaction: alanine is first activated by ATP to form Ala-AMP and then transferred to the acceptor end of tRNA(Ala). Also edits incorrectly charged Ser-tRNA(Ala) and Gly-tRNA(Ala) via its editing domain. This is Alanine--tRNA ligase from Neisseria meningitidis serogroup C / serotype 2a (strain ATCC 700532 / DSM 15464 / FAM18).